A 537-amino-acid polypeptide reads, in one-letter code: MSGDGEDELCRNALALVNELCFSVRGNHNNEKCIEFSYLLRDRDRTRHIETDISVSLLSVIVTFCGIVLLGVSLFVSWKLCWIPWRDKGLNPQRRDSQHHPHQHLHHHHSHFTDLTVERVDCGPEMPERSYLDLESYPESGIKLSQTSPDIPVDTSSGSKENNIPNAHSQQQVSAPPPATRFNSLPRPIPQQLSSPEFGTQADEKVEQVTSIGQIKPELYKQRSIDTEAKKHQKVNCGRINFMLRYTYTTEQLVVKILKALDLPAKDANGFSDPYVKIYLLPDRKKKFQTKVHRKTLNPIFNETFQFNVPFNELQNRKLHFSVYDFDRFSRHDLIGQVVLDNLLEFSDFSEDTTIWRDILEATSEKADLGEINFSLCYLPTAGRLTITIIKATNLKAMDLTGFSDPYVKASLICDERRLKKRKTSIKKNTLNPVYNEALVFDIPNENMEHVNVIIAVMDYDCIGHNEVIGMCRVGNATDGPGREHWNEMLANPRKPIEQWHQLIEEKVMNSYMTKSFAAGTGATKPVTIVVESPHSV.

Residues 1-52 (MSGDGEDELCRNALALVNELCFSVRGNHNNEKCIEFSYLLRDRDRTRHIETD) are Vesicular-facing. The chain crosses the membrane as a helical span at residues 53 to 78 (ISVSLLSVIVTFCGIVLLGVSLFVSW). The Cytoplasmic segment spans residues 79–537 (KLCWIPWRDK…TIVVESPHSV (459 aa)). 2 disordered regions span residues 92–111 (PQRR…HHSH) and 142–200 (IKLS…EFGT). The segment covering 100 to 110 (HPHQHLHHHHS) has biased composition (basic residues). Polar residues predominate over residues 143–174 (KLSQTSPDIPVDTSSGSKENNIPNAHSQQQVS). Residues 228 to 477 (EAKKHQKVNC…VIGMCRVGNA (250 aa)) are phospholipid binding. C2 domains are found at residues 236-357 (NCGR…TIWR) and 368-501 (DLGE…EQWH). Residues Asp267, Asp273, Asp325, Phe326, Asp327, Ser330, Asp333, Asp399, Asp405, Asp459, and Asp461 each contribute to the Ca(2+) site.

This sequence belongs to the synaptotagmin family. In terms of assembly, homodimer or homotrimer (possible). Ca(2+) serves as cofactor.

The protein resides in the cytoplasmic vesicle. Its subcellular location is the secretory vesicle. It localises to the synaptic vesicle membrane. It is found in the synapse. May have a regulatory role in the membrane interactions during trafficking of synaptic vesicles at the active zone of the synapse. It binds acidic phospholipids with a specificity that requires the presence of both an acidic head group and a diacyl backbone. This Diplobatis ommata (Ocellated electric ray) protein is Synaptotagmin-C (P65-C).